The following is a 179-amino-acid chain: Adaptation to cold protein A (179 aa).

The segment at 133–179 is disordered; the sequence is KATPAPKRSADDDFEDEDSDYADYSDDDDDEGEEEDGYYDHYDDEDR. Residues 144-179 show a composition bias toward acidic residues; that stretch reads DDFEDEDSDYADYSDDDDDEGEEEDGYYDHYDDEDR.

In terms of biological role, part of an operon involved in cold adaptation. This is Adaptation to cold protein A from Shewanella oneidensis (strain ATCC 700550 / JCM 31522 / CIP 106686 / LMG 19005 / NCIMB 14063 / MR-1).